We begin with the raw amino-acid sequence, 70 residues long: UPF0337 protein BC_3635 (70 aa).

The protein belongs to the UPF0337 (CsbD) family.

This is UPF0337 protein BC_3635 from Bacillus cereus (strain ATCC 14579 / DSM 31 / CCUG 7414 / JCM 2152 / NBRC 15305 / NCIMB 9373 / NCTC 2599 / NRRL B-3711).